The sequence spans 212 residues: Redox-sensing transcriptional repressor Rex (212 aa).

Positions 17-56 form a DNA-binding region, H-T-H motif; sequence LYYRIFKRFNTDGIEKASSKQIADALGIDSATVRRDFSYF. NAD(+) is bound at residue 91–96; it reads GCGNIG.

It belongs to the transcriptional regulatory Rex family. Homodimer.

Its subcellular location is the cytoplasm. In terms of biological role, modulates transcription in response to changes in cellular NADH/NAD(+) redox state. The sequence is that of Redox-sensing transcriptional repressor Rex from Streptococcus agalactiae serotype III (strain NEM316).